Reading from the N-terminus, the 182-residue chain is tRNA-splicing endonuclease (182 aa).

Catalysis depends on residues tyrosine 119, histidine 127, and lysine 158.

The protein belongs to the tRNA-intron endonuclease family. Archaeal short subfamily. As to quaternary structure, homotetramer; although the tetramer contains four active sites, only two participate in the cleavage. Therefore, it should be considered as a dimer of dimers.

It catalyses the reaction pretRNA = a 3'-half-tRNA molecule with a 5'-OH end + a 5'-half-tRNA molecule with a 2',3'-cyclic phosphate end + an intron with a 2',3'-cyclic phosphate and a 5'-hydroxyl terminus.. In terms of biological role, endonuclease that removes tRNA introns. Cleaves pre-tRNA at the 5'- and 3'-splice sites to release the intron. The products are an intron and two tRNA half-molecules bearing 2',3' cyclic phosphate and 5'-OH termini. Recognizes a pseudosymmetric substrate in which 2 bulged loops of 3 bases are separated by a stem of 4 bp. This chain is tRNA-splicing endonuclease, found in Saccharolobus islandicus (strain M.16.27) (Sulfolobus islandicus).